A 694-amino-acid polypeptide reads, in one-letter code: Glycine--tRNA ligase beta subunit (694 aa).

This sequence belongs to the class-II aminoacyl-tRNA synthetase family. Tetramer of two alpha and two beta subunits.

The protein localises to the cytoplasm. The enzyme catalyses tRNA(Gly) + glycine + ATP = glycyl-tRNA(Gly) + AMP + diphosphate. This chain is Glycine--tRNA ligase beta subunit, found in Shewanella denitrificans (strain OS217 / ATCC BAA-1090 / DSM 15013).